Reading from the N-terminus, the 176-residue chain is Zinc finger protein 428 (176 aa).

Residues methionine 1–threonine 152 are disordered. Over residues leucine 16 to tyrosine 46 the composition is skewed to acidic residues. Residue threonine 96 is modified to Phosphothreonine. Positions proline 126–aspartate 138 are enriched in basic and acidic residues. A C2H2-type zinc finger spans residues tyrosine 149–histidine 171.

The sequence is that of Zinc finger protein 428 (Znf428) from Mus musculus (Mouse).